A 590-amino-acid chain; its full sequence is ATP-dependent zinc metalloprotease FtsH 1 (590 aa).

Residues 1–8 (MLKLTKKQ) lie on the Cytoplasmic side of the membrane. A helical transmembrane segment spans residues 9–29 (LIIVLGIAIVVVSAIGYAVYT). The Extracellular portion of the chain corresponds to 30 to 103 (QYFNEDKLEI…QVRETTDQYS (74 aa)). The helical transmembrane segment at 104 to 124 (VVQVITFVVLIGGFIGVAIFL) threads the bilayer. At 125–590 (SKKNATQTSK…NEIFSGFQSM (466 aa)) the chain is on the cytoplasmic side. Position 195 to 202 (195 to 202 (GSPGTGKT)) interacts with ATP. His-418 is a binding site for Zn(2+). Glu-419 is a catalytic residue. Zn(2+)-binding residues include His-422 and Asp-496.

The protein in the central section; belongs to the AAA ATPase family. It in the C-terminal section; belongs to the peptidase M41 family. In terms of assembly, homohexamer. Zn(2+) is required as a cofactor.

The protein localises to the cell membrane. Acts as a processive, ATP-dependent zinc metallopeptidase for both cytoplasmic and membrane proteins. Plays a role in the quality control of integral membrane proteins. The chain is ATP-dependent zinc metalloprotease FtsH 1 from Alkaliphilus metalliredigens (strain QYMF).